Reading from the N-terminus, the 291-residue chain is Small ribosomal subunit protein uS2 (291 aa).

This sequence belongs to the universal ribosomal protein uS2 family.

This is Small ribosomal subunit protein uS2 from Lawsonia intracellularis (strain PHE/MN1-00).